We begin with the raw amino-acid sequence, 178 residues long: Caveolin-1 (178 aa).

Position 2 is an N-acetylserine (S2). A Phosphoserine modification is found at S2. A required for homooligomerization region spans residues 2-94 (SGGKYVDSEG…WKASFTTFTV (93 aa)). The Cytoplasmic portion of the chain corresponds to 2-104 (SGGKYVDSEG…TKYWFYRLLS (103 aa)). Residue K5 is modified to N6-acetyllysine; alternate. K5 participates in a covalent cross-link: Glycyl lysine isopeptide (Lys-Gly) (interchain with G-Cter in ubiquitin); alternate. Y6 carries the post-translational modification Phosphotyrosine. Position 9 is a phosphoserine (S9). The residue at position 14 (Y14) is a Phosphotyrosine; by ABL1. Y25 carries the post-translational modification Phosphotyrosine. Residues K26 and K30 each participate in a glycyl lysine isopeptide (Lys-Gly) (interchain with G-Cter in ubiquitin) cross-link. S37 bears the Phosphoserine mark. Glycyl lysine isopeptide (Lys-Gly) (interchain with G-Cter in ubiquitin) cross-links involve residues K39, K47, and K57. An interaction with CAVIN3 region spans residues 82–94 (DGIWKASFTTFTV). The helical intramembrane region spans 105-125 (ALFGIPMALIWGIYFAILSFL). Residues 126 to 178 (HIWAVVPCIKSFLIEIQCISRVYSIYVHTVCDPLFEAVGKIFSNVRINLQKEI) are Cytoplasmic-facing. Residues 131 to 142 (VPCIKSFLIEIQ) form an interacts with SPRY1, SPRY2, SPRY3 and SPRY4 region. 3 S-palmitoyl cysteine lipidation sites follow: C133, C143, and C156. Residues 149 to 160 (SIYVHTVCDPLF) are interacts with SPRY1, SPRY2, and SPRY4. Residues 167–178 (FSNVRINLQKEI) form an interacts with SPRY1, SPRY2, SPRY3 and SPRY4 region.

Belongs to the caveolin family. Homooligomer. Interacts with GLIPR2. Interacts with NOSTRIN. Interacts with SNAP25 and STX1A. Interacts (via the N-terminus) with DPP4; the interaction is direct. Interacts with CTNNB1, CDH1 and JUP. Interacts with PACSIN2; this interaction induces membrane tubulation. Interacts with SLC7A9. Interacts with BMX and BTK. Interacts with TGFBR1. Interacts with CAVIN3 (via leucine-zipper domain) in a cholesterol-sensitive manner. Interacts with CAVIN1. Interacts with EHD2 in a cholesterol-dependent manner. Forms a ternary complex with UBXN6 and VCP; mediates CAV1 targeting to lysosomes for degradation. Interacts with ABCG1; this interaction regulates ABCG1-mediated cholesterol efflux. Interacts with NEU3; this interaction enhances NEU3 sialidase activity within caveola. Interacts (via C-terminus) with SPRY1, SPRY2 (via C-terminus), SPRY3, and SPRY4. Interacts with IGFBP5; this interaction allows trafficking of IGFBP5 from the plasma membrane to the nucleus. In terms of processing, phosphorylated at Tyr-14 by ABL1 in response to oxidative stress. Ubiquitinated. Undergo monoubiquitination and multi- and/or polyubiquitination. Monoubiquitination of N-terminal lysines promotes integration in a ternary complex with UBXN6 and VCP which promotes oligomeric CAV1 targeting to lysosomes for degradation. Ubiquitinated by ZNRF1; leading to degradation and modulation of the TLR4-mediated immune response.

The protein localises to the golgi apparatus membrane. It localises to the cell membrane. It is found in the membrane. Its subcellular location is the caveola. The protein resides in the membrane raft. Its function is as follows. May act as a scaffolding protein within caveolar membranes. Forms a stable heterooligomeric complex with CAV2 that targets to lipid rafts and drives caveolae formation. Mediates the recruitment of CAVIN proteins (CAVIN1/2/3/4) to the caveolae. Interacts directly with G-protein alpha subunits and can functionally regulate their activity. Involved in the costimulatory signal essential for T-cell receptor (TCR)-mediated T-cell activation. Its binding to DPP4 induces T-cell proliferation and NF-kappa-B activation in a T-cell receptor/CD3-dependent manner. Recruits CTNNB1 to caveolar membranes and may regulate CTNNB1-mediated signaling through the Wnt pathway. Negatively regulates TGFB1-mediated activation of SMAD2/3 by mediating the internalization of TGFBR1 from membrane rafts leading to its subsequent degradation. Binds 20(S)-hydroxycholesterol (20(S)-OHC). This chain is Caveolin-1 (CAV1), found in Pongo abelii (Sumatran orangutan).